The sequence spans 89 residues: Small ribosomal subunit protein bS20 (89 aa).

The protein belongs to the bacterial ribosomal protein bS20 family.

Functionally, binds directly to 16S ribosomal RNA. This Phenylobacterium zucineum (strain HLK1) protein is Small ribosomal subunit protein bS20.